We begin with the raw amino-acid sequence, 337 residues long: Structural protein VP9 (337 aa).

Its subcellular location is the virion. The protein localises to the host cytoplasm. The chain is Structural protein VP9 from Colorado tick fever virus (strain USA/Florio N-7180) (CTFV).